The sequence spans 131 residues: Small ribosomal subunit protein uS8 (131 aa).

It belongs to the universal ribosomal protein uS8 family. Part of the 30S ribosomal subunit. Contacts proteins S5 and S12.

Its function is as follows. One of the primary rRNA binding proteins, it binds directly to 16S rRNA central domain where it helps coordinate assembly of the platform of the 30S subunit. This is Small ribosomal subunit protein uS8 from Chlorobium phaeobacteroides (strain DSM 266 / SMG 266 / 2430).